The following is a 221-amino-acid chain: GFP-like non-fluorescent chromoprotein (221 aa).

The 2-iminomethyl-5-imidazolinone (Gln-Gly) cross-link spans 62–64 (QYG). At tyrosine 63 the chain carries (E)-2,3-didehydrotyrosine.

Belongs to the GFP family. In terms of assembly, homotetramer. In terms of processing, contains a chromophore consisting of modified amino acid residues. The chromophore is formed by autocatalytic backbone condensation between Xaa-N and Gly-(N+2), oxidation of Tyr-(N+1) to didehydrotyrosine, and formation of a double bond to the alpha-amino nitrogen of residue Xaa-N. Maturation of the chromophore requires nothing other than molecular oxygen.

Functionally, thought to play a role in photoprotection of the coral's resident symbiont microalgae's photosystems from photoinhibition caused by high light levels found near the surface of coral reefs. The chain is GFP-like non-fluorescent chromoprotein from Montipora efflorescens (Pore coral).